Consider the following 448-residue polypeptide: Leukocyte immunoglobulin-like receptor subfamily B member 4 (448 aa).

An N-terminal signal peptide occupies residues 1 to 21 (MIPTFTALLCLGLSLGPRTHM). Residues 22–259 (QAGPLPKPTL…PHSGLRRHWE (238 aa)) lie on the Extracellular side of the membrane. Ig-like C2-type domains follow at residues 27–118 (PKPT…LVMT) and 124–218 (PTLS…LIVS). 2 cysteine pairs are disulfide-bonded: Cys-49-Cys-98 and Cys-144-Cys-195. The interval 217–248 (VSGSLEDPRPSPTRSVSTAAGPEDQPLMPTGS) is disordered. The chain crosses the membrane as a helical span at residues 260-280 (VLIGVLVVSILLLSLLLFLLL). The Cytoplasmic segment spans residues 281-448 (QHWRQGKHRT…PSVYATLAIH (168 aa)). The interval 297–448 (DFQRPPGAAE…PSVYATLAIH (152 aa)) is disordered. Ser-319 is modified (phosphoserine). A compositionally biased stretch (basic and acidic residues) spans 344–354 (MDTRQSPHDED). The ITIM motif 1 signature appears at 358–363 (VTYAKV). The segment covering 384–398 (LDTKDRQAEEDRQMD) has biased composition (basic and acidic residues). Short sequence motifs (ITIM motif) lie at residues 410–415 (VTYAQL) and 440–445 (SVYATL).

Interacts with PTPN6. In terms of tissue distribution, detected on monocytes, macrophages, dendritic cells, natural killer cells and B-cells (at protein level). Expressed in the lung.

It is found in the cell membrane. Its function is as follows. Inhibitory receptor involved in the down-regulation of the immune response and the development of immune tolerance. Receptor for FN1. Receptor for apolipoprotein APOE. Receptor for ALCAM/CD166. Inhibits receptor-mediated phosphorylation of cellular proteins and mobilization of intracellular calcium ions. Inhibits FCGR1A/CD64-mediated monocyte activation by inducing phosphatase-mediated down-regulation of the phosphorylation of multiple proteins including LCK, SYK, LAT and ERK, leading to a reduction in TNF production. This inhibition of monocyte activation occurs at least in part via binding to FN1. Inhibits T cell proliferation, inducing anergy, suppressing the differentiation of IFNG-producing CD8+ cytotoxic T cells and enhancing the generation of CD8+ T suppressor cells. Induces up-regulation of CD86 on dendritic cells. Interferes with TNFRSF5-signaling and NF-kappa-B up-regulation. In Homo sapiens (Human), this protein is Leukocyte immunoglobulin-like receptor subfamily B member 4 (LILRB4).